Consider the following 103-residue polypeptide: Small ribosomal subunit protein uS10 (103 aa).

It belongs to the universal ribosomal protein uS10 family. Part of the 30S ribosomal subunit.

Functionally, involved in the binding of tRNA to the ribosomes. The protein is Small ribosomal subunit protein uS10 of Campylobacter lari (strain RM2100 / D67 / ATCC BAA-1060).